The chain runs to 629 residues: Flap endonuclease GEN-like 1 (629 aa).

The segment at 1–87 (MGVGGSFWDL…DGQPSPLKSQ (87 aa)) is N-domain. Residues 2–98 (GVGGSFWDLL…RAARFFRGSG (97 aa)) form an XPG-N domain region. D31, D78, E148, E150, D169, D171, and D221 together coordinate Mg(2+). The interval 136–221 (EYLGMPVLRA…VAMALLVGSD (86 aa)) is XPG-I domain. The tract at residues 136 to 225 (EYLGMPVLRA…LLVGSDHDLH (90 aa)) is I-domain. The tract at residues 221–421 (DHDLHGVPGF…MLPMLSTIYL (201 aa)) is 5'-3' exonuclease domain. The interval 594–617 (KKGLSGDSGKDGSRKSSDVDLSKN) is disordered. Residues 601-614 (SGKDGSRKSSDVDL) show a composition bias toward basic and acidic residues.

This sequence belongs to the XPG/RAD2 endonuclease family. GEN subfamily. As to quaternary structure, monomer. Interacts with PCNA. PCNA stimulates the nuclease activity without altering cleavage specificity. The cofactor is Mg(2+). In terms of tissue distribution, highly expressed in anthers. Expressed in roots and leaves.

Its subcellular location is the nucleus. Its function is as follows. Endonuclease which cleaves flap structures at the junction between single-stranded DNA and double-stranded DNA. Possesses both single-stranded and double-stranded DNA-binding activities. Involved in early microspore development, but does not alter meiosis or tapetal cells development. Possesses Holliday junction (HJ) resolvase activity in vitro. Cleaves HJ at symmetrically related sites of the branch point. The chain is Flap endonuclease GEN-like 1 from Oryza sativa subsp. japonica (Rice).